The chain runs to 243 residues: UDP-2,3-diacylglucosamine hydrolase (243 aa).

Mn(2+) is bound by residues aspartate 9, histidine 11, aspartate 42, asparagine 79, and histidine 114. Residue 79–80 (NR) participates in substrate binding. Substrate contacts are provided by aspartate 122, serine 160, asparagine 164, and histidine 195. Mn(2+) is bound by residues histidine 195 and histidine 197.

Belongs to the LpxH family. Mn(2+) is required as a cofactor.

The protein resides in the cell inner membrane. It catalyses the reaction UDP-2-N,3-O-bis[(3R)-3-hydroxytetradecanoyl]-alpha-D-glucosamine + H2O = 2-N,3-O-bis[(3R)-3-hydroxytetradecanoyl]-alpha-D-glucosaminyl 1-phosphate + UMP + 2 H(+). It participates in glycolipid biosynthesis; lipid IV(A) biosynthesis; lipid IV(A) from (3R)-3-hydroxytetradecanoyl-[acyl-carrier-protein] and UDP-N-acetyl-alpha-D-glucosamine: step 4/6. In terms of biological role, hydrolyzes the pyrophosphate bond of UDP-2,3-diacylglucosamine to yield 2,3-diacylglucosamine 1-phosphate (lipid X) and UMP by catalyzing the attack of water at the alpha-P atom. Involved in the biosynthesis of lipid A, a phosphorylated glycolipid that anchors the lipopolysaccharide to the outer membrane of the cell. This Coxiella burnetii (strain Dugway 5J108-111) protein is UDP-2,3-diacylglucosamine hydrolase.